Consider the following 198-residue polypeptide: Snake venom metalloproteinase neuwiedase (198 aa).

One can recognise a Peptidase M12B domain in the interval 8–198; sequence RYIELVIVAD…QTFLTNHNPQ (191 aa). The Ca(2+) site is built by E11 and D95. H144 contributes to the Zn(2+) binding site. E145 is an active-site residue. H148 and H154 together coordinate Zn(2+). 2 cysteine pairs are disulfide-bonded: C159–C183 and C161–C166.

This sequence belongs to the venom metalloproteinase (M12B) family. P-I subfamily. Zn(2+) is required as a cofactor. In terms of tissue distribution, expressed by the venom gland.

The protein localises to the secreted. With respect to regulation, inhibited by EDTA, EGTA and 1,10-phenanthroline, partially inhibited by beta-mercaptoethanol and not inhibited by serine protease inhibitors (leupeptin and aprotinin). Also inhibited by an excess of zinc, mercury and magnesium ions. Extracts of the plant Casearia mariquitensis neutralizes the decrease of platelets and plasma fibrinogen induced by the protease. The same extracts also partially inhibit Bbeta chain cleavage, but not Aalpha chain cleavage. This metalloprotease hydrolyzes the Aalpha chain of fibrin and fibrinogen first followed by the Bbeta chain and shows no effect on the gamma chain. It is also able to degrade type I collagen, fibronectin, laminin and induces inflammatory reaction. It is devoid of hemorrhagic and thrombotic activities, except in lung where it induces pulmonary bleeding. It also induces a mild myotoxic reaction. It is not able to inhibit platelet aggregation, but it induces decrease of platelets and plasma fibrinogen. It contributes to local tissue damage by inducing edema, inflammatory infiltrate and mild myotoxicity, and by degrading extracellular matrix components. The chain is Snake venom metalloproteinase neuwiedase from Bothrops pauloensis (Neuwied's lancehead).